The following is a 1136-amino-acid chain: Carbamoyl phosphate synthase large chain (1136 aa).

Residues 1 to 402 (MPKRTDIKSV…SLGKAMRSID (402 aa)) are carboxyphosphate synthetic domain. The ATP site is built by R129, R169, G175, G176, E208, I210, E215, G241, V242, H243, Q285, and E299. An ATP-grasp 1 domain is found at 133–328 (KKVVKEAGAE…IAKIATKLAL (196 aa)). 3 residues coordinate Mg(2+): Q285, E299, and N301. Mn(2+) is bound by residues Q285, E299, and N301. An oligomerization domain region spans residues 403-551 (KRHMGFSWDG…YYYSCYADET (149 aa)). Residues 552–962 (ELRKREREAV…AFAKSQLASY (411 aa)) form a carbamoyl phosphate synthetic domain region. The ATP-grasp 2 domain occupies 681-881 (GEVLRQEHLN…LAKAAARIMA (201 aa)). ATP is bound by residues R717, K765, L767, E772, G797, V798, H799, S800, Q840, and E852. The Mg(2+) site is built by Q840, E852, and N854. Positions 840, 852, and 854 each coordinate Mn(2+). Residues 963-1136 (EGGLPTNGNV…KEEGEEARAQ (174 aa)) are allosteric domain. The region spanning 964 to 1122 (GGLPTNGNVF…QEHSRELYEL (159 aa)) is the MGS-like domain.

The protein belongs to the CarB family. In terms of assembly, composed of two chains; the small (or glutamine) chain promotes the hydrolysis of glutamine to ammonia, which is used by the large (or ammonia) chain to synthesize carbamoyl phosphate. Tetramer of heterodimers (alpha,beta)4. The cofactor is Mg(2+). Mn(2+) is required as a cofactor.

It catalyses the reaction hydrogencarbonate + L-glutamine + 2 ATP + H2O = carbamoyl phosphate + L-glutamate + 2 ADP + phosphate + 2 H(+). It carries out the reaction hydrogencarbonate + NH4(+) + 2 ATP = carbamoyl phosphate + 2 ADP + phosphate + 2 H(+). The protein operates within amino-acid biosynthesis; L-arginine biosynthesis; carbamoyl phosphate from bicarbonate: step 1/1. It participates in pyrimidine metabolism; UMP biosynthesis via de novo pathway; (S)-dihydroorotate from bicarbonate: step 1/3. Large subunit of the glutamine-dependent carbamoyl phosphate synthetase (CPSase). CPSase catalyzes the formation of carbamoyl phosphate from the ammonia moiety of glutamine, carbonate, and phosphate donated by ATP, constituting the first step of 2 biosynthetic pathways, one leading to arginine and/or urea and the other to pyrimidine nucleotides. The large subunit (synthetase) binds the substrates ammonia (free or transferred from glutamine from the small subunit), hydrogencarbonate and ATP and carries out an ATP-coupled ligase reaction, activating hydrogencarbonate by forming carboxy phosphate which reacts with ammonia to form carbamoyl phosphate. The sequence is that of Carbamoyl phosphate synthase large chain from Bifidobacterium animalis subsp. lactis (strain AD011).